The following is a 328-amino-acid chain: Putative gluconeogenesis factor (328 aa).

It belongs to the gluconeogenesis factor family.

Its subcellular location is the cytoplasm. In terms of biological role, required for morphogenesis under gluconeogenic growth conditions. The protein is Putative gluconeogenesis factor of Aquifex aeolicus (strain VF5).